The sequence spans 772 residues: Putative ribosomal protein S6 kinase alpha-2 (772 aa).

Residues 17 to 284 (FALLRVLGKG…VDEIKNHKFM (268 aa)) enclose the Protein kinase 1 domain. ATP contacts are provided by residues 23 to 31 (LGKGAYGKV) and Lys49. Asp145 functions as the Proton acceptor in the catalytic mechanism. A phosphoserine; by autocatalysis mark is found at Ser180, Ser342, and Ser347. Residues 285 to 353 (SSIDWDAAVK…VSPSVIFAND (69 aa)) enclose the AGC-kinase C-terminal domain. Residues 382 to 653 (KSDAGLLGKG…MQELTAHMWL (272 aa)) form the Protein kinase 2 domain. ATP is bound by residues 388–396 (LGKGAFSVV) and Lys411. The active-site Proton acceptor is Asp500. Residues 706-772 (RGIKRQSGDK…IRETRGSDSS (67 aa)) form a disordered region. Ser712 carries the phosphoserine; by autocatalysis modification. Polar residues-rich tracts occupy residues 718–727 (SGNSKNSRVT) and 739–748 (EMTSSTSRPS).

This sequence belongs to the protein kinase superfamily. AGC Ser/Thr protein kinase family. S6 kinase subfamily. Requires Mg(2+) as cofactor.

It catalyses the reaction L-seryl-[protein] + ATP = O-phospho-L-seryl-[protein] + ADP + H(+). The catalysed reaction is L-threonyl-[protein] + ATP = O-phospho-L-threonyl-[protein] + ADP + H(+). Activated by multiple phosphorylations on threonine and serine residues. In terms of biological role, serine/threonine kinase that may play a role in mediating the mitogen- and stress-induced effects on transcription. May repress transcription via phosphorylation of 'Ser-1' of histone H2A. May phosphorylate histone H3. The polypeptide is Putative ribosomal protein S6 kinase alpha-2 (rskn-2) (Caenorhabditis elegans).